Reading from the N-terminus, the 612-residue chain is Calcium-dependent protein kinase 27 (612 aa).

Glycine 2 carries N-myristoyl glycine lipidation. A disordered region spans residues 23–132; sequence PRHAAPSSPS…AHIKRISSAG (110 aa). A compositionally biased stretch (low complexity) spans 28-50; it reads PSSPSQPTTTSRSIPVVLPSAPS. The span at 51–100 shows a compositional bias: pro residues; that stretch reads SKPPPPTQTAPPVPVVISEPPPPQPQPEPQPAAPSQPPPPQEQPSPPPPA. Basic residues predominate over residues 117-127; the sequence is SRAKKPAHIKR. A Protein kinase domain is found at 150–408; it reads YSLGRKLGQG…AHEVLCHPWL (259 aa). ATP is bound by residues 156 to 164 and lysine 179; that span reads LGQGQFGTT. Catalysis depends on aspartate 274, which acts as the Proton acceptor. The segment at 414–444 is autoinhibitory domain; it reads APDKPLDSAVLSRLRQFSAMNKLKKMALRVI. 4 EF-hand domains span residues 451–486, 487–522, 523–558, and 561–592; these read EEIA…VGAN, MKES…LNKV, ERED…FGIE, and RLED…TTTG. Positions 464, 466, 468, 470, 475, 500, 502, 504, 506, 511, 536, 538, 540, 542, 547, 570, 572, 574, 576, and 581 each coordinate Ca(2+).

It belongs to the protein kinase superfamily. Ser/Thr protein kinase family. CDPK subfamily.

It localises to the membrane. It catalyses the reaction L-seryl-[protein] + ATP = O-phospho-L-seryl-[protein] + ADP + H(+). It carries out the reaction L-threonyl-[protein] + ATP = O-phospho-L-threonyl-[protein] + ADP + H(+). Its activity is regulated as follows. Activated by calcium. Autophosphorylation may play an important role in the regulation of the kinase activity. Functionally, may play a role in signal transduction pathways that involve calcium as a second messenger. The protein is Calcium-dependent protein kinase 27 of Oryza sativa subsp. japonica (Rice).